Here is a 120-residue protein sequence, read N- to C-terminus: NAD(P)H-quinone oxidoreductase subunit 3, chloroplastic (120 aa).

3 helical membrane passes run 9–29 (IFWA…LLSG), 64–84 (MFAL…PWAM), and 88–108 (VLGV…IVGL).

Belongs to the complex I subunit 3 family. NDH is composed of at least 16 different subunits, 5 of which are encoded in the nucleus.

The protein resides in the plastid. Its subcellular location is the chloroplast thylakoid membrane. It carries out the reaction a plastoquinone + NADH + (n+1) H(+)(in) = a plastoquinol + NAD(+) + n H(+)(out). The catalysed reaction is a plastoquinone + NADPH + (n+1) H(+)(in) = a plastoquinol + NADP(+) + n H(+)(out). In terms of biological role, NDH shuttles electrons from NAD(P)H:plastoquinone, via FMN and iron-sulfur (Fe-S) centers, to quinones in the photosynthetic chain and possibly in a chloroplast respiratory chain. The immediate electron acceptor for the enzyme in this species is believed to be plastoquinone. Couples the redox reaction to proton translocation, and thus conserves the redox energy in a proton gradient. The polypeptide is NAD(P)H-quinone oxidoreductase subunit 3, chloroplastic (Fagopyrum esculentum subsp. ancestrale (Wild buckwheat)).